A 293-amino-acid polypeptide reads, in one-letter code: Fructose-bisphosphate aldolase (293 aa).

S50 contacts D-glyceraldehyde 3-phosphate. The Proton donor role is filled by D85. 4 residues coordinate Zn(2+): H86, D106, E136, and H178. G179 serves as a coordination point for dihydroxyacetone phosphate. H208 serves as a coordination point for Zn(2+). Dihydroxyacetone phosphate is bound by residues 209–211 and 230–233; these read GGS and NVNT.

It belongs to the class II fructose-bisphosphate aldolase family. Requires Zn(2+) as cofactor.

The enzyme catalyses beta-D-fructose 1,6-bisphosphate = D-glyceraldehyde 3-phosphate + dihydroxyacetone phosphate. The protein operates within carbohydrate degradation; glycolysis; D-glyceraldehyde 3-phosphate and glycerone phosphate from D-glucose: step 4/4. Functionally, catalyzes the aldol condensation of dihydroxyacetone phosphate (DHAP or glycerone-phosphate) with glyceraldehyde 3-phosphate (G3P) to form fructose 1,6-bisphosphate (FBP) in gluconeogenesis and the reverse reaction in glycolysis. This is Fructose-bisphosphate aldolase (fba) from Streptococcus pyogenes serotype M1.